The sequence spans 317 residues: WSCD family member AAEL009094 (317 aa).

The chain crosses the membrane as a helical span at residues leucine 8 to valine 28. N-linked (GlcNAc...) asparagine glycans are attached at residues asparagine 150, asparagine 226, and asparagine 232.

This sequence belongs to the WSCD family.

The protein resides in the membrane. The chain is WSCD family member AAEL009094 from Aedes aegypti (Yellowfever mosquito).